A 901-amino-acid chain; its full sequence is Schlafen family member 11 (901 aa).

The Mg(2+) site is built by Glu-209 and Glu-214. The active site involves Lys-216. Residues His-285, Cys-287, Cys-321, and Cys-322 each coordinate Zn(2+). Residue Gly-599–Thr-606 participates in ATP binding.

This sequence belongs to the Schlafen family. Subgroup III subfamily. In terms of assembly, homodimer. Interacts with MCM3. Interacts with DHX9. Interacts with RPA1. It depends on Mg(2+) as a cofactor. Exhibits a wider expression range in ovarian and colon adenocarcinoma than in their corresponding healthy tissues.

It localises to the nucleus. Its subcellular location is the chromosome. Its function is as follows. Inhibitor of DNA replication that promotes cell death in response to DNA damage. Acts as a guardian of the genome by killing cells with defective replication. Persistently blocks stressed replication forks by opening chromatin across replication initiation sites at stressed replication forks, possibly leading to unwind DNA ahead of the MCM helicase and block fork progression, ultimately leading to cell death. Upon DNA damage, inhibits translation of ATR or ATM based on distinct codon usage without disrupting early DNA damage response signaling. Antiviral restriction factor with manganese-dependent type II tRNA endoribonuclease. A single tRNA molecule is bound and cleaved by the SLFN11 dimer. Specifically abrogates the production of retroviruses such as human immunodeficiency virus 1 (HIV-1) by acting as a specific inhibitor of the synthesis of retroviruses encoded proteins in a codon-usage-dependent manner. Impairs the replication of human cytomegalovirus (HCMV) and some Flaviviruses. Exploits the unique viral codon bias towards A/T nucleotides. Also acts as an interferon (IFN)-induced antiviral protein which acts as an inhibitor of retrovirus protein synthesis. The sequence is that of Schlafen family member 11 from Homo sapiens (Human).